We begin with the raw amino-acid sequence, 358 residues long: NAC domain-containing protein 12 (358 aa).

An NAC domain is found at 16–177; the sequence is VPPGFRFHPT…GWVVCRVFRK (162 aa). A DNA-binding region spans residues 116–183; that stretch reads IGLRKTLVFY…VFRKKNYQKI (68 aa).

Stems and roots, specifically in interfascicular fibers (sclerenchyma), cells differentiating into vascular vessels (cambium), and xylem.

It localises to the nucleus. In terms of biological role, transcriptional activator of genes involved in biosynthesis of secondary walls. Together with NST1, required for the secondary cell wall thickening and lignification of sclerenchymatous fibers and secondary xylem vessels (tracheary elements). Seems to repress the secondary cell wall thickening of xylary fibers. May also regulate the secondary cell wall lignification of other tissues. Binds to and activates the promoter of MYB46. In Arabidopsis thaliana (Mouse-ear cress), this protein is NAC domain-containing protein 12.